The chain runs to 120 residues: MIEIFKDTGATHDLVYHSKINTFVWDVEFDIVLSDSKELNKCYFVKCFNPYRINGKCDFAVSSIDIFSEGKRLLIENEFNFKITKAVHVATSKDVTEIVLHLSERISSPFPIVKEVVYLD.

The protein belongs to the DSR anti-defense 1 family. In terms of assembly, interacts with Bacillus subtilis DSR2 (via C-terminus) in a 2:4 ratio; this interaction leads to the absence of activation of the NADase defense activity of DSR2.

Its function is as follows. Counteracts the defense-associated sirtuin 2 (DSR2) defense system of the host. Inhibits the NADase activity of host DSR2 by competing with the tail tube protein that normally activates DSR2. This is SPbeta prophage-derived DSR anti-defense 1 (yotI) from Bacillus subtilis (strain 168).